Reading from the N-terminus, the 71-residue chain is UPF0434 protein Meso_3270 (71 aa).

The protein belongs to the UPF0434 family.

The sequence is that of UPF0434 protein Meso_3270 from Chelativorans sp. (strain BNC1).